Here is a 207-residue protein sequence, read N- to C-terminus: Vascular endothelial growth factor B (207 aa).

Residues 1 to 21 form the signal peptide; the sequence is MSPLLRRLLLVALLQLARTQA. 3 disulfide bridges follow: Cys-47–Cys-89, Cys-78–Cys-122, and Cys-82–Cys-124. Over residues 129-139 the composition is skewed to basic and acidic residues; sequence KESAVKPDRVA. The segment at 129 to 178 is disordered; sequence KESAVKPDRVAIPHHRPQPRSVPGWDSTPGASSPADIIHPTPAPGSSARL.

This sequence belongs to the PDGF/VEGF growth factor family. As to quaternary structure, homodimer; disulfide-linked. Can also form heterodimer with VEGF. VEGF-B186 is O-glycosylated. In terms of tissue distribution, abundantly expressed in heart, brain, kidney and skeletal muscle.

It localises to the secreted. Growth factor for endothelial cells. VEGF-B167 binds heparin and neuropilin-1 whereas the binding to neuropilin-1 of VEGF-B186 is regulated by proteolysis. VEGF-B seems to be required for normal heart function in adult but is not required for proper development of the cardiovascular system either during development or for angiogenesis in adults. This is Vascular endothelial growth factor B (Vegfb) from Mus musculus (Mouse).